The following is an 878-amino-acid chain: Ecdysone receptor (878 aa).

Disordered regions lie at residues 1-27 (MKRR…SSSN) and 209-254 (GLGM…SKKG). The modulating stretch occupies residues 1 to 263 (MKRRWSNNGG…GPAPRVQEEL (263 aa)). 2 consecutive NR C4-type zinc fingers follow at residues 264–284 (CLVC…CEGC) and 300–324 (CKFG…LKKC). Positions 264–336 (CLVCGDRASG…VGMRPECVVP (73 aa)) form a DNA-binding region, nuclear receptor. The interval 344 to 374 (RREKKAQKEKDKMTTSPSSQHGGNGSLASGG) is disordered. The segment covering 365–374 (GGNGSLASGG) has biased composition (gly residues). The NR LBD domain maps to 419-654 (NQLAVIYKLI…FLEEIWDVHA (236 aa)). 2 stretches are compositionally biased toward low complexity: residues 698–709 (TSAAAAAAQHQP) and 728–759 (QTQP…QLQP). Residues 698–759 (TSAAAAAAQH…QPQLQTQLQP (62 aa)) are disordered.

It belongs to the nuclear hormone receptor family. NR1 subfamily. Heterodimer of USP and ECR. Only the heterodimer is capable of high-affinity binding to ecdysone. Interacts with trr in an ecdysone-dependent manner. Upon ecdysone stimulation, interacts with Nup98. As to expression, isoform B1 predominates over isoform A in larval tissues, imaginal histoblast nests and midgut islands. Isoform A predominates over B1 in imaginal disks, and the larval prothoracic gland.

Its subcellular location is the nucleus. Functionally, receptor for ecdysone. Binds to ecdysone response elements (ECRES) following ecdysone-binding, and recruitment of a complex containing the histone methyltransferase trr, leads to activate transcription of target genes. The polypeptide is Ecdysone receptor (EcR) (Drosophila melanogaster (Fruit fly)).